The sequence spans 823 residues: Protein ROOT HAIR DEFECTIVE 3 homolog 2 (823 aa).

The Cytoplasmic portion of the chain corresponds to 1 to 688 (MEVPISGGGG…EAHRRSNNWL (688 aa)). In terms of domain architecture, GB1/RHD3-type G spans 45-260 (GLSYAVVSIV…IAPGGLAADR (216 aa)). 55-62 (GPQGSGKS) provides a ligand contact to GTP. Residues 226–246 (LSSYEEKENLFKEQVGQLRQR) adopt a coiled-coil conformation. Residues 689–709 (PPAWTVLLLAILGYNEFIFLL) traverse the membrane as a helical segment. Over 710–712 (RNP) the chain is Lumenal. The chain crosses the membrane as a helical span at residues 713–733 (LYLLGLFVAFVVSYAAWLQYD). The Cytoplasmic portion of the chain corresponds to 734 to 823 (ITAYFRHGTL…SVGSNSDDES (90 aa)). The segment at 770–823 (NQKSSSHPPRHRPPLHPQSFRNQAQQQSQAQVQYQAPSSLSSSSSVGSNSDDES) is disordered. Residues 786 to 823 (PQSFRNQAQQQSQAQVQYQAPSSLSSSSSVGSNSDDES) are compositionally biased toward low complexity.

The protein belongs to the TRAFAC class dynamin-like GTPase superfamily. GB1/RHD3 GTPase family. RHD3 subfamily.

Its subcellular location is the endoplasmic reticulum membrane. Its function is as follows. Probable GTP-binding protein that may be involved in cell development. The protein is Protein ROOT HAIR DEFECTIVE 3 homolog 2 of Oryza sativa subsp. japonica (Rice).